The sequence spans 432 residues: 3-phosphoshikimate 1-carboxyvinyltransferase (432 aa).

3-phosphoshikimate contacts are provided by K22, S23, and R27. K22 is a phosphoenolpyruvate binding site. Positions 96 and 127 each coordinate phosphoenolpyruvate. Residues S173, S174, Q175, S201, D316, N339, and K343 each contribute to the 3-phosphoshikimate site. Q175 lines the phosphoenolpyruvate pocket. D316 acts as the Proton acceptor in catalysis. Positions 347, 391, and 416 each coordinate phosphoenolpyruvate.

This sequence belongs to the EPSP synthase family. Monomer.

It is found in the cytoplasm. The enzyme catalyses 3-phosphoshikimate + phosphoenolpyruvate = 5-O-(1-carboxyvinyl)-3-phosphoshikimate + phosphate. It functions in the pathway metabolic intermediate biosynthesis; chorismate biosynthesis; chorismate from D-erythrose 4-phosphate and phosphoenolpyruvate: step 6/7. Its function is as follows. Catalyzes the transfer of the enolpyruvyl moiety of phosphoenolpyruvate (PEP) to the 5-hydroxyl of shikimate-3-phosphate (S3P) to produce enolpyruvyl shikimate-3-phosphate and inorganic phosphate. The chain is 3-phosphoshikimate 1-carboxyvinyltransferase from Haemophilus influenzae (strain ATCC 51907 / DSM 11121 / KW20 / Rd).